Consider the following 283-residue polypeptide: Pantothenate synthetase (283 aa).

An ATP-binding site is contributed by Met30–His37. Catalysis depends on His37, which acts as the Proton donor. Residue Gln61 coordinates (R)-pantoate. Gln61 serves as a coordination point for beta-alanine. Gly149 to Asp152 serves as a coordination point for ATP. Gln155 provides a ligand contact to (R)-pantoate. ATP contacts are provided by residues Leu178 and Arg186–Arg189.

The protein belongs to the pantothenate synthetase family. Homodimer.

It is found in the cytoplasm. The catalysed reaction is (R)-pantoate + beta-alanine + ATP = (R)-pantothenate + AMP + diphosphate + H(+). The protein operates within cofactor biosynthesis; (R)-pantothenate biosynthesis; (R)-pantothenate from (R)-pantoate and beta-alanine: step 1/1. In terms of biological role, catalyzes the condensation of pantoate with beta-alanine in an ATP-dependent reaction via a pantoyl-adenylate intermediate. The sequence is that of Pantothenate synthetase from Christiangramia forsetii (strain DSM 17595 / CGMCC 1.15422 / KT0803) (Gramella forsetii).